A 330-amino-acid chain; its full sequence is Aspartate--ammonia ligase (330 aa).

The protein belongs to the class-II aminoacyl-tRNA synthetase family. AsnA subfamily.

Its subcellular location is the cytoplasm. The enzyme catalyses L-aspartate + NH4(+) + ATP = L-asparagine + AMP + diphosphate + H(+). The protein operates within amino-acid biosynthesis; L-asparagine biosynthesis; L-asparagine from L-aspartate (ammonia route): step 1/1. This Streptococcus pyogenes serotype M1 protein is Aspartate--ammonia ligase.